The sequence spans 364 residues: Methylthioribose-1-phosphate isomerase (364 aa).

Asp-254 functions as the Proton donor in the catalytic mechanism.

The protein belongs to the eIF-2B alpha/beta/delta subunits family. MtnA subfamily.

It is found in the cytoplasm. The protein resides in the nucleus. The catalysed reaction is 5-(methylsulfanyl)-alpha-D-ribose 1-phosphate = 5-(methylsulfanyl)-D-ribulose 1-phosphate. It participates in amino-acid biosynthesis; L-methionine biosynthesis via salvage pathway; L-methionine from S-methyl-5-thio-alpha-D-ribose 1-phosphate: step 1/6. Its function is as follows. Catalyzes the interconversion of methylthioribose-1-phosphate (MTR-1-P) into methylthioribulose-1-phosphate (MTRu-1-P). The sequence is that of Methylthioribose-1-phosphate isomerase from Drosophila erecta (Fruit fly).